Consider the following 267-residue polypeptide: Acryloyl-CoA reductase electron transfer subunit gamma (267 aa).

Heterohexadecamer; tetramer of tetramers. Each tetramer is composed of 2 alpha (AcrC), a beta (AcrA) and a gamma (AcrB) subunit.

The protein resides in the cytoplasm. Part of the ETF-acryloyl-CoA reductase complex involved in the pathway of L-alanine fermentation. The electron transfer flavoprotein (ETF) serves as a specific electron acceptor for acryloyl-CoA reductase. The sequence is that of Acryloyl-CoA reductase electron transfer subunit gamma (acrB) from Anaerotignum propionicum (Clostridium propionicum).